A 245-amino-acid chain; its full sequence is Orotidine 5'-phosphate decarboxylase (245 aa).

Substrate contacts are provided by residues D22, K44, 71–80, T131, R192, Q201, G221, and R222; that span reads DLKFHDIPNT. K73 serves as the catalytic Proton donor.

Belongs to the OMP decarboxylase family. Type 1 subfamily. As to quaternary structure, homodimer.

It catalyses the reaction orotidine 5'-phosphate + H(+) = UMP + CO2. The protein operates within pyrimidine metabolism; UMP biosynthesis via de novo pathway; UMP from orotate: step 2/2. Catalyzes the decarboxylation of orotidine 5'-monophosphate (OMP) to uridine 5'-monophosphate (UMP). The chain is Orotidine 5'-phosphate decarboxylase from Escherichia coli O157:H7.